The primary structure comprises 227 residues: Charged multivesicular body protein 4c (227 aa).

The disordered stretch occupies residues 1–27 (MSKITKLFKSSGGSGSSSKNRKGPSAQ). Coiled coils occupy residues 32–94 (KLRE…STIE) and 129–187 (LEKI…MANV). Residues 178-227 (EDLNSQMANVNLPSVPSSKLPSTKLPSRPASSRKKVEDDDDMQMLAAWAT) form a disordered region. Low complexity predominate over residues 189 to 206 (LPSVPSSKLPSTKLPSRP).

The protein belongs to the SNF7 family. In terms of assembly, probable core component of the endosomal sorting required for transport complex III (ESCRT-III). ESCRT-III components are thought to multimerize to form a flat lattice on the perimeter membrane of the endosome.

It localises to the cytoplasm. Its subcellular location is the cytosol. The protein localises to the late endosome membrane. In terms of biological role, probable core component of the endosomal sorting required for transport complex III (ESCRT-III) which is involved in multivesicular bodies (MVBs) formation and sorting of endosomal cargo proteins into MVBs. MVBs contain intraluminal vesicles (ILVs) that are generated by invagination and scission from the limiting membrane of the endosome and mostly are delivered to lysosomes enabling degradation of membrane proteins, such as stimulated growth factor receptors, lysosomal enzymes and lipids. Key component of the cytokinesis checkpoint, a process required to delay abscission to prevent both premature resolution of intercellular chromosome bridges and accumulation of DNA damage. The chain is Charged multivesicular body protein 4c (chmp4c) from Xenopus laevis (African clawed frog).